A 1007-amino-acid polypeptide reads, in one-letter code: Exportin-7 (1007 aa).

Belongs to the exportin family.

It localises to the nucleus. It is found in the cytoplasm. Its subcellular location is the nuclear pore complex. Functionally, mediates the nuclear export of proteins (cargos) with broad substrate specificity. This Dictyostelium discoideum (Social amoeba) protein is Exportin-7 (xpo7).